Consider the following 383-residue polypeptide: L-lactate dehydrogenase (383 aa).

Residues 1-380 (MIISSGNDYR…NADCLVQAIK (380 aa)) form the FMN hydroxy acid dehydrogenase domain. Substrate is bound at residue tyrosine 24. FMN contacts are provided by serine 106 and glutamine 127. Residue tyrosine 129 coordinates substrate. Threonine 155 contributes to the FMN binding site. A substrate-binding site is contributed by arginine 164. Residue lysine 251 coordinates FMN. Catalysis depends on histidine 275, which acts as the Proton acceptor. Arginine 278 contacts substrate. Residue 306–330 (DSGIRNGLDVVRMLALGADTVLLGR) participates in FMN binding.

Belongs to the FMN-dependent alpha-hydroxy acid dehydrogenase family. FMN is required as a cofactor.

The protein localises to the cell inner membrane. The catalysed reaction is (S)-lactate + A = pyruvate + AH2. In terms of biological role, catalyzes the conversion of L-lactate to pyruvate. Is coupled to the respiratory chain. This is L-lactate dehydrogenase from Acinetobacter baumannii (strain AB307-0294).